Consider the following 191-residue polypeptide: Apoptosis regulator BHRF1 (191 aa).

The interaction with host VRK2 stretch occupies residues 1-18; that stretch reads MAYSTREILLALCIRDSR. Asn-22 carries N-linked (GlcNAc...) asparagine; by host glycosylation. The BH1 motif lies at 89–109; sequence EIFHRGDPSLGRALAWMAWCM. An interaction with host VRK2 region spans residues 89-142; the sequence is EIFHRGDPSLGRALAWMAWCMHACRTLCCNQSTPYYVVDLSVRGMLEASEGLDG. An N-linked (GlcNAc...) asparagine; by host glycan is attached at Asn-118. The short motif at 142–157 is the BH2 element; it reads GWIHQQGGWSTLIEDN. The chain crosses the membrane as a helical span at residues 166–186; the sequence is WTLFLAGLTLSLLVICSYLFI.

The protein belongs to the Bcl-2 family. As to quaternary structure, interacts with isoform 1 of host VRK2; this interaction is involved in protecting cells from apoptosis. Interacts with host PRA1; this interaction seems to modulate BHRF1 anti-apoptotic activity. Interacts with host BCL2L11. Interacts with host BAD and BBC3. Interacts with BALF1; BALF1 acting as a negative regulator of the survival function of BHRF1. Interacts with host BECN1.

The protein localises to the host membrane. The protein resides in the host mitochondrion. Functionally, prevents premature death of the host cell during virus production, which would otherwise reduce the amount of progeny virus. Acts as a host B-cell leukemia/lymphoma 2 (Bcl-2) homolog, and interacts with pro-apoptotic proteins to prevent mitochondria permeabilization, release of cytochrome c and subsequent apoptosis of the host cell. In addition, plays a role in the inhibiton of host BECN1-mediated starvation-induced autophagy without affecting basal levels of autophagy. This is Apoptosis regulator BHRF1 from Epstein-Barr virus (strain GD1) (HHV-4).